We begin with the raw amino-acid sequence, 117 residues long: Immunoglobulin kappa variable 1D-12 (117 aa).

The first 22 residues, 1-22, serve as a signal peptide directing secretion; the sequence is MDMMVPAQLLGLLLLWFPGSRC. The interval 23–45 is framework-1; the sequence is DIQMTQSPSSVSASVGDRVTITC. The region spanning 24–117 is the Ig-like domain; that stretch reads IQMTQSPSSV…YYCQQANSFP (94 aa). The cysteines at positions 45 and 110 are disulfide-linked. The tract at residues 46–56 is complementarity-determining-1; it reads RASQGISSWLA. The segment at 57–71 is framework-2; that stretch reads WYQQKPGKAPKLLIY. Positions 72–78 are complementarity-determining-2; the sequence is AASSLQS. Residues 79 to 110 form a framework-3 region; that stretch reads GVPSRFSGSGSGTDFTLTISSLQPEDFATYYC. A complementarity-determining-3 region spans residues 111 to 117; that stretch reads QQANSFP.

Immunoglobulins are composed of two identical heavy chains and two identical light chains; disulfide-linked.

It localises to the secreted. Its subcellular location is the cell membrane. Its function is as follows. V region of the variable domain of immunoglobulin light chains that participates in the antigen recognition. Immunoglobulins, also known as antibodies, are membrane-bound or secreted glycoproteins produced by B lymphocytes. In the recognition phase of humoral immunity, the membrane-bound immunoglobulins serve as receptors which, upon binding of a specific antigen, trigger the clonal expansion and differentiation of B lymphocytes into immunoglobulins-secreting plasma cells. Secreted immunoglobulins mediate the effector phase of humoral immunity, which results in the elimination of bound antigens. The antigen binding site is formed by the variable domain of one heavy chain, together with that of its associated light chain. Thus, each immunoglobulin has two antigen binding sites with remarkable affinity for a particular antigen. The variable domains are assembled by a process called V-(D)-J rearrangement and can then be subjected to somatic hypermutations which, after exposure to antigen and selection, allow affinity maturation for a particular antigen. This Homo sapiens (Human) protein is Immunoglobulin kappa variable 1D-12.